The chain runs to 130 residues: Astrocytic phosphoprotein PEA-15 (130 aa).

Residues 3 to 81 form the DED domain; it reads EYGTLLQDLT…RPDLLTMVVD (79 aa). Phosphoserine occurs at positions 61, 90, 104, and 116. The microtubule-binding stretch occupies residues 98–107; the sequence is KLTRIPSAKK. Residues 122-129 form a microtubule-binding region; the sequence is KLAPPPKK.

Binds RPS6KA3, MAPK3 and MAPK1. Transient interaction with PLD1 and PLD2. Interacts with CASP8 and FADD. Phosphorylated by protein kinase C and calcium-calmodulin-dependent protein kinase. These phosphorylation events are modulated by neurotransmitters or hormones. Ubiquitously expressed. Most abundant in tissues such as heart, brain, muscle and adipose tissue which utilize glucose as an energy source. Lower expression in glucose-producing tissues. Higher levels of expression are found in tissues from individuals with type 2 diabetes than in controls.

The protein localises to the cytoplasm. In terms of biological role, blocks Ras-mediated inhibition of integrin activation and modulates the ERK MAP kinase cascade. Inhibits RPS6KA3 activities by retaining it in the cytoplasm. Inhibits both TNFRSF6- and TNFRSF1A-mediated CASP8 activity and apoptosis. Regulates glucose transport by controlling both the content of SLC2A1 glucose transporters on the plasma membrane and the insulin-dependent trafficking of SLC2A4 from the cell interior to the surface. This Homo sapiens (Human) protein is Astrocytic phosphoprotein PEA-15 (PEA15).